A 166-amino-acid chain; its full sequence is Large ribosomal subunit protein eL21 (166 aa).

The protein belongs to the eukaryotic ribosomal protein eL21 family. In terms of assembly, component of the large ribosomal subunit.

It is found in the cytoplasm. It localises to the cytosol. The protein resides in the endoplasmic reticulum. In terms of biological role, component of the large ribosomal subunit. The ribosome is a large ribonucleoprotein complex responsible for the synthesis of proteins in the cell. The chain is Large ribosomal subunit protein eL21 (RPL21) from Entamoeba histolytica (strain ATCC 30459 / HM-1:IMSS / ABRM).